A 245-amino-acid chain; its full sequence is DNA polymerase sliding clamp (245 aa).

Belongs to the PCNA family. Homotrimer. The subunits circularize to form a toroid; DNA passes through its center. Replication factor C (RFC) is required to load the toroid on the DNA.

Functionally, sliding clamp subunit that acts as a moving platform for DNA processing. Responsible for tethering the catalytic subunit of DNA polymerase and other proteins to DNA during high-speed replication. The protein is DNA polymerase sliding clamp of Methanosarcina acetivorans (strain ATCC 35395 / DSM 2834 / JCM 12185 / C2A).